The sequence spans 556 residues: Threonylcarbamoyladenosine tRNA methylthiotransferase (556 aa).

Residues 17-57 (SATDPKPHDRQSARKNIVPRARKRNKNNIQEEEPPADSTIP) are disordered. An MTTase N-terminal domain is found at 60-168 (QKIWIRTWGC…VVEVVEETIK (109 aa)). Residues C69, C105, C134, C210, C214, and C217 each contribute to the [4Fe-4S] cluster site. The Radical SAM core domain maps to 196 to 427 (RKNPLIEIIS…QLFHSYDPYD (232 aa)). One can recognise a TRAM domain in the interval 427–489 (DHKIGQKQQV…KHFMKGQPVQ (63 aa)). A helical transmembrane segment spans residues 536–556 (VFLFLTALLAAVIAFVGTKLV).

The protein belongs to the methylthiotransferase family. CDKAL1 subfamily. The cofactor is [4Fe-4S] cluster.

The protein localises to the endoplasmic reticulum membrane. It carries out the reaction N(6)-L-threonylcarbamoyladenosine(37) in tRNA + (sulfur carrier)-SH + AH2 + 2 S-adenosyl-L-methionine = 2-methylsulfanyl-N(6)-L-threonylcarbamoyladenosine(37) in tRNA + (sulfur carrier)-H + 5'-deoxyadenosine + L-methionine + A + S-adenosyl-L-homocysteine + 2 H(+). Catalyzes the methylthiolation of N6-threonylcarbamoyladenosine (t(6)A), leading to the formation of 2-methylthio-N6-threonylcarbamoyladenosine (ms(2)t(6)A) at position 37 in tRNAs that read codons beginning with adenine. The chain is Threonylcarbamoyladenosine tRNA methylthiotransferase (cdkal1) from Xenopus laevis (African clawed frog).